A 718-amino-acid polypeptide reads, in one-letter code: Polyribonucleotide nucleotidyltransferase (718 aa).

Residues Asp-497 and Asp-503 each contribute to the Mg(2+) site. Residues 564–623 (PRLLTMKIDPEQIGLVIGPGGKTIKGITEQTGSKIDIADDGTVTIAALEAEKAEKAKQII) enclose the KH domain. The S1 motif domain maps to 633-701 (GEVYMGRVTR…AKGRLNLTRL (69 aa)).

It belongs to the polyribonucleotide nucleotidyltransferase family. The cofactor is Mg(2+).

Its subcellular location is the cytoplasm. The enzyme catalyses RNA(n+1) + phosphate = RNA(n) + a ribonucleoside 5'-diphosphate. Involved in mRNA degradation. Catalyzes the phosphorolysis of single-stranded polyribonucleotides processively in the 3'- to 5'-direction. The sequence is that of Polyribonucleotide nucleotidyltransferase from Rippkaea orientalis (strain PCC 8801 / RF-1) (Cyanothece sp. (strain PCC 8801)).